A 95-amino-acid chain; its full sequence is Acylphosphatase 2 (95 aa).

In terms of domain architecture, Acylphosphatase-like spans 6-93 (RVIVTVQGRV…PLPPGFEVRP (88 aa)). Active-site residues include Arg-21 and Asn-39.

The protein belongs to the acylphosphatase family.

The catalysed reaction is an acyl phosphate + H2O = a carboxylate + phosphate + H(+). The sequence is that of Acylphosphatase 2 (acyP2) from Ralstonia nicotianae (strain ATCC BAA-1114 / GMI1000) (Ralstonia solanacearum).